The primary structure comprises 316 residues: Putative phosphoribosylaminoimidazole-succinocarboxamide synthase 2 (316 aa).

Belongs to the SAICAR synthetase family.

The catalysed reaction is 5-amino-1-(5-phospho-D-ribosyl)imidazole-4-carboxylate + L-aspartate + ATP = (2S)-2-[5-amino-1-(5-phospho-beta-D-ribosyl)imidazole-4-carboxamido]succinate + ADP + phosphate + 2 H(+). The protein operates within purine metabolism; IMP biosynthesis via de novo pathway; 5-amino-1-(5-phospho-D-ribosyl)imidazole-4-carboxamide from 5-amino-1-(5-phospho-D-ribosyl)imidazole-4-carboxylate: step 1/2. This is Putative phosphoribosylaminoimidazole-succinocarboxamide synthase 2 (purC2) from Agrobacterium fabrum (strain C58 / ATCC 33970) (Agrobacterium tumefaciens (strain C58)).